The following is a 333-amino-acid chain: Fructose-1,6-bisphosphatase class 1 (333 aa).

Glutamate 92, aspartate 113, leucine 115, and aspartate 116 together coordinate Mg(2+). Substrate contacts are provided by residues 116–119 (DGSS), asparagine 209, tyrosine 242, and lysine 272. A Mg(2+)-binding site is contributed by glutamate 278.

Belongs to the FBPase class 1 family. As to quaternary structure, homotetramer. The cofactor is Mg(2+).

It is found in the cytoplasm. It catalyses the reaction beta-D-fructose 1,6-bisphosphate + H2O = beta-D-fructose 6-phosphate + phosphate. Its pathway is carbohydrate biosynthesis; Calvin cycle. The protein is Fructose-1,6-bisphosphatase class 1 of Chlorobium chlorochromatii (strain CaD3).